The sequence spans 401 residues: uncharacterized protein (401 aa).

Positions 7, 13, 16, and 94 each coordinate [4Fe-4S] cluster. Gln-230, Tyr-259, Glu-280, and Asp-328 together coordinate S-adenosyl-L-methionine. Cys-355 acts as the Nucleophile in catalysis.

Belongs to the class I-like SAM-binding methyltransferase superfamily. RNA M5U methyltransferase family.

This is an uncharacterized protein from Chlamydia pneumoniae (Chlamydophila pneumoniae).